Here is a 247-residue protein sequence, read N- to C-terminus: ATP synthase subunit a, chloroplastic (247 aa).

5 consecutive transmembrane segments (helical) span residues 38-58 (QVLITSWVVIAILLGSAIIAV), 95-115 (VPFIGTMFLFIFVSNWSGALL), 134-154 (INTTVALALLTSVAYFYAGLT), 199-219 (LVVVVLVSLVPLVVPIPVMFL), and 220-240 (GLFTSGIQALIFATLAAAYIG).

It belongs to the ATPase A chain family. F-type ATPases have 2 components, CF(1) - the catalytic core - and CF(0) - the membrane proton channel. CF(1) has five subunits: alpha(3), beta(3), gamma(1), delta(1), epsilon(1). CF(0) has four main subunits: a, b, b' and c.

Its subcellular location is the plastid. The protein resides in the chloroplast thylakoid membrane. Key component of the proton channel; it plays a direct role in the translocation of protons across the membrane. The protein is ATP synthase subunit a, chloroplastic of Carica papaya (Papaya).